Reading from the N-terminus, the 118-residue chain is Large ribosomal subunit protein uL18 (118 aa).

It belongs to the universal ribosomal protein uL18 family. As to quaternary structure, part of the 50S ribosomal subunit; part of the 5S rRNA/L5/L18/L25 subcomplex. Contacts the 5S and 23S rRNAs.

Its function is as follows. This is one of the proteins that bind and probably mediate the attachment of the 5S RNA into the large ribosomal subunit, where it forms part of the central protuberance. This Campylobacter jejuni subsp. jejuni serotype O:2 (strain ATCC 700819 / NCTC 11168) protein is Large ribosomal subunit protein uL18.